A 959-amino-acid chain; its full sequence is Kinesin-like protein NACK1 (959 aa).

Residues 1 to 28 (MTVRTPGTPASKIDKTPATTPNGHRGRE) are disordered. One can recognise a Kinesin motor domain in the interval 30–353 (KIVVTVRLRP…LYFATRAKEV (324 aa)). An ATP-binding site is contributed by 117–124 (GQTSSGKT). At Thr145 the chain carries Phosphothreonine. The stretch at 362–429 (VVSDKQLVKH…LRRKLQEEQG (68 aa)) forms a coiled coil. 4 disordered regions span residues 417–438 (VDEL…SVSP), 451–473 (SPNL…GRQS), 598–640 (LPSN…FLKS), and 658–700 (NRAP…SVNM). 2 stretches are compositionally biased toward basic and acidic residues: residues 418 to 429 (DELRRKLQEEQG) and 454 to 466 (LEEK…ERTR). Residues 557–598 (KSVSANLKEEIARLHSQGSTIADLEEQLENVQKSLDKLVMSL) are a coiled coil. Low complexity predominate over residues 600–611 (SNNDQQSNNDTT). The segment covering 613–623 (KAKHPSKKKKL) has biased composition (basic residues). Positions 630-640 (NSINRQNFLKS) are enriched in polar residues. Thr675 and Thr690 each carry phosphothreonine. The segment at 685-756 (SSKEGTPYRR…EANEAAGYNL (72 aa)) is required for the binding to NPK1.

It belongs to the TRAFAC class myosin-kinesin ATPase superfamily. Kinesin family. KIN-7 subfamily. As to quaternary structure, interacts (via C-terminus) with NPK1 (via C-terminus). In terms of processing, phosphorylated at Thr-145, Thr-675 and Thr-690 by CDKAs and CDKBs. The phosphorylation occurs before metaphase and inhibits the interaction with NPK1 preventing the transition to cytokinesis.

It is found in the cytoplasm. Its subcellular location is the nucleus. The protein localises to the cytoskeleton. It localises to the phragmoplast. Probable plus end-directed motor protein that functions in the NACK-PQR (NPK1-NQK1/MEK1-NRK1) MAP kinase signaling pathway, which is essential for somatic cell cytokinesis, especially for the cell-plate formation and its expansion. Regulates the activity and the localization of NPK1 by association through the non-catalytic region of the kinase. The chain is Kinesin-like protein NACK1 (NACK1) from Nicotiana tabacum (Common tobacco).